The primary structure comprises 212 residues: Hemagglutinin 2 (212 aa).

Its subcellular location is the secreted. Its function is as follows. Induces agglutination of neuraminidase-treated erythrocytes. This is Hemagglutinin 2 (hag2) from Eikenella corrodens.